A 740-amino-acid chain; its full sequence is Catalase-peroxidase (740 aa).

The interval 1–44 is disordered; sequence MSDSCPVAHDGNTASTSESENPAIPSPTPTGNRPRTNRDWWPNQ. Residues 109–231 constitute a cross-link (tryptophyl-tyrosyl-methioninium (Trp-Tyr) (with M-257)); that stretch reads WHAAGTYRIA…LGAVQMGLIY (123 aa). Residue H110 is the Proton acceptor of the active site. Positions 231–257 form a cross-link, tryptophyl-tyrosyl-methioninium (Tyr-Met) (with W-109); sequence YVNPEGPNGQPDPVAAARDIRETFARM. H272 lines the heme b pocket.

It belongs to the peroxidase family. Peroxidase/catalase subfamily. Homodimer or homotetramer. The cofactor is heme b. Formation of the three residue Trp-Tyr-Met cross-link is important for the catalase, but not the peroxidase activity of the enzyme.

It carries out the reaction H2O2 + AH2 = A + 2 H2O. The catalysed reaction is 2 H2O2 = O2 + 2 H2O. Functionally, bifunctional enzyme with both catalase and broad-spectrum peroxidase activity. In Rhodococcus erythropolis (strain PR4 / NBRC 100887), this protein is Catalase-peroxidase.